The chain runs to 264 residues: Glycerol uptake facilitator protein (264 aa).

Residues M1–K3 lie on the Cytoplasmic side of the membrane. A helical membrane pass occupies residues S4–V32. The Periplasmic portion of the chain corresponds to A33–F37. A helical membrane pass occupies residues G38 to A58. At G59 to S61 the chain is on the cytoplasmic side. Residues G62–L65 lie within the membrane without spanning it. The NPA 1 motif lies at N66–A68. Residues N66–F76 constitute an intramembrane region (helical). Over A77–K82 the chain is Cytoplasmic. Residues K83–Y106 form a helical membrane-spanning segment. Over R107–L141 the chain is Periplasmic. Residues S142 to D167 traverse the membrane as a helical segment. At G168–P175 the chain is on the cytoplasmic side. The chain crosses the membrane as a helical span at residues L176 to M192. The Periplasmic portion of the chain corresponds to G193–T196. Residues G197–M200 lie within the membrane without spanning it. The NPA 2 motif lies at N201–A203. The segment at residues N201–L214 is an intramembrane region (helical). At A215–P229 the chain is on the periplasmic side. A helical membrane pass occupies residues Y230 to A252. Over I253–E264 the chain is Cytoplasmic.

Belongs to the MIP/aquaporin (TC 1.A.8) family.

It localises to the cell inner membrane. The enzyme catalyses glycerol(in) = glycerol(out). Mediates glycerol diffusion across the cytoplasmic membrane via a pore-type mechanism. This Haemophilus influenzae (strain ATCC 51907 / DSM 11121 / KW20 / Rd) protein is Glycerol uptake facilitator protein (glpF).